A 273-amino-acid polypeptide reads, in one-letter code: Dermonecrotic toxin LdSicTox-alphaIB3avi (273 aa).

His-5 is a catalytic residue. Glu-25 and Asp-27 together coordinate Mg(2+). His-41 functions as the Nucleophile in the catalytic mechanism. 2 cysteine pairs are disulfide-bonded: Cys-45–Cys-51 and Cys-47–Cys-190. Mg(2+) is bound at residue Asp-85.

The protein belongs to the arthropod phospholipase D family. Class II subfamily. Mg(2+) is required as a cofactor. In terms of tissue distribution, expressed by the venom gland.

Its subcellular location is the secreted. The catalysed reaction is an N-(acyl)-sphingosylphosphocholine = an N-(acyl)-sphingosyl-1,3-cyclic phosphate + choline. It carries out the reaction an N-(acyl)-sphingosylphosphoethanolamine = an N-(acyl)-sphingosyl-1,3-cyclic phosphate + ethanolamine. It catalyses the reaction a 1-acyl-sn-glycero-3-phosphocholine = a 1-acyl-sn-glycero-2,3-cyclic phosphate + choline. The enzyme catalyses a 1-acyl-sn-glycero-3-phosphoethanolamine = a 1-acyl-sn-glycero-2,3-cyclic phosphate + ethanolamine. Its function is as follows. Dermonecrotic toxins cleave the phosphodiester linkage between the phosphate and headgroup of certain phospholipids (sphingolipid and lysolipid substrates), forming an alcohol (often choline) and a cyclic phosphate. This toxin acts on sphingomyelin (SM). It may also act on ceramide phosphoethanolamine (CPE), lysophosphatidylcholine (LPC) and lysophosphatidylethanolamine (LPE), but not on lysophosphatidylserine (LPS), and lysophosphatidylglycerol (LPG). It acts by transphosphatidylation, releasing exclusively cyclic phosphate products as second products. Induces dermonecrosis, hemolysis, increased vascular permeability, edema, inflammatory response, and platelet aggregation. In Loxosceles deserta (Desert recluse spider), this protein is Dermonecrotic toxin LdSicTox-alphaIB3avi.